Consider the following 159-residue polypeptide: Odorant-binding protein (159 aa).

The protein belongs to the calycin superfamily. Lipocalin family. Homodimer.

It is found in the secreted. In terms of biological role, this protein binds a wide variety of chemical odorants. The chain is Odorant-binding protein from Bos taurus (Bovine).